The sequence spans 488 residues: Zinc metalloproteinase-disintegrin agkistin (488 aa).

Positions 1-20 are cleaved as a signal peptide; the sequence is MIQVLLVTICLAVFPYQGSS. Residues 21 to 195 constitute a propeptide that is removed on maturation; the sequence is IILESGNVND…NFPPDGRIEF (175 aa). A Peptidase M12B domain is found at 198–394; that stretch reads RYIELVIVAD…NPLASYCLYN (197 aa). Ca(2+) is bound at residue glutamate 201. Residue asparagine 258 is glycosylated (N-linked (GlcNAc...) asparagine). Position 285 (aspartate 285) interacts with Ca(2+). 3 disulfide bridges follow: cysteine 309/cysteine 391, cysteine 349/cysteine 373, and cysteine 351/cysteine 356. Position 334 (histidine 334) interacts with Zn(2+). The active site involves glutamate 335. 2 residues coordinate Zn(2+): histidine 338 and histidine 344. Ca(2+) contacts are provided by cysteine 391, asparagine 394, valine 406, asparagine 409, glutamate 413, glutamate 416, and aspartate 419. The Disintegrin domain occupies 404–488; that stretch reads PPVCGNYYLE…AGCPRNPSHA (85 aa). Intrachain disulfides connect cysteine 407-cysteine 426, cysteine 418-cysteine 436, cysteine 420-cysteine 431, cysteine 430-cysteine 453, cysteine 444-cysteine 450, cysteine 449-cysteine 474, and cysteine 462-cysteine 481. A Cell attachment site motif is present at residues 466–468; it reads RGD.

The protein belongs to the venom metalloproteinase (M12B) family. P-II subfamily. P-IIb sub-subfamily. As to quaternary structure, monomer. It depends on Zn(2+) as a cofactor. As to expression, expressed by the venom gland.

It is found in the secreted. Functionally, inhibits ADP-induced human platelet aggregation, inhibits bovine aortic endothelial cells (BAEC) migration, has anti-angiogenic activity and induces BAEC and human micro-vascular endothelial cell (HMEC) apoptosis. The metalloproteinase domain may act in hemorrhage. The sequence is that of Zinc metalloproteinase-disintegrin agkistin from Gloydius halys (Chinese water mocassin).